A 210-amino-acid polypeptide reads, in one-letter code: Thymidylate kinase (210 aa).

13 to 20 contacts ATP; it reads GLEGAGKS.

Belongs to the thymidylate kinase family.

It carries out the reaction dTMP + ATP = dTDP + ADP. Functionally, phosphorylation of dTMP to form dTDP in both de novo and salvage pathways of dTTP synthesis. In Shewanella loihica (strain ATCC BAA-1088 / PV-4), this protein is Thymidylate kinase.